Reading from the N-terminus, the 188-residue chain is Heparin-binding hemagglutinin homolog (188 aa).

Residues 162–188 (KAAAPARKAPAKKAPAKKAPAKKVTQK) form a disordered region. Residues 170 to 188 (APAKKAPAKKAPAKKVTQK) are compositionally biased toward basic residues.

It to M.tuberculosis HbhA.

Its function is as follows. Might mediate adherence to host cells by binding sulfated glycoconjugates. In Mycobacterium leprae (strain TN), this protein is Heparin-binding hemagglutinin homolog (hbhA).